The primary structure comprises 704 residues: Fibulin-1 (704 aa).

An N-terminal signal peptide occupies residues Met-1–Gly-25. Intrachain disulfides connect Cys-33/Cys-59, Cys-34/Cys-66, Cys-47/Cys-67, Cys-76/Cys-107, Cys-89/Cys-108, Cys-110/Cys-134, Cys-111/Cys-141, Cys-124/Cys-142, Cys-181/Cys-191, Cys-187/Cys-200, Cys-202/Cys-215, Cys-221/Cys-234, Cys-228/Cys-243, Cys-249/Cys-261, Cys-267/Cys-280, Cys-274/Cys-289, Cys-295/Cys-307, Cys-313/Cys-326, Cys-320/Cys-335, Cys-342/Cys-355, Cys-361/Cys-374, Cys-368/Cys-383, Cys-385/Cys-398, Cys-404/Cys-416, Cys-412/Cys-425, Cys-427/Cys-440, Cys-446/Cys-455, Cys-451/Cys-464, Cys-466/Cys-480, Cys-486/Cys-499, Cys-495/Cys-508, Cys-510/Cys-524, Cys-530/Cys-543, Cys-537/Cys-552, and Cys-557/Cys-578. Anaphylatoxin-like domains follow at residues Cys-33–His-74, Tyr-75–Tyr-109, and Cys-110–Cys-142. Asn-96 is a glycosylation site (N-linked (GlcNAc...) asparagine). The EGF-like 1 domain occupies Leu-177–Glu-216. The EGF-like 2; calcium-binding domain occupies Asp-217–Lys-262. The region spanning Asp-263–Ile-308 is the EGF-like 3; calcium-binding domain. Residues Asp-309–Val-356 form the EGF-like 4; calcium-binding domain. The EGF-like 5; calcium-binding domain maps to Asp-357–Ile-399. Residues Asp-357–Glu-441 are self-association and FN1-binding. An EGF-like 6; calcium-binding domain is found at Asp-400–Glu-441. The EGF-like 7; calcium-binding domain maps to Asp-442–Glu-481. Residues Asp-482–Gln-525 form the EGF-like 8; calcium-binding domain. The 54-residue stretch at Asp-526–Ile-579 folds into the EGF-like 9; calcium-binding domain. Asn-536 and Asn-540 each carry an N-linked (GlcNAc...) asparagine glycan.

It belongs to the fibulin family. As to quaternary structure, homomultimerizes and interacts with various extracellular matrix components.

The protein localises to the secreted. It localises to the extracellular space. The protein resides in the extracellular matrix. Its function is as follows. Incorporated into fibronectin-containing matrix fibers. May play a role in cell adhesion and migration along protein fibers within the extracellular matrix (ECM). Could be important for certain developmental processes and contribute to the supramolecular organization of ECM architecture, in particular to those of basement membranes. The sequence is that of Fibulin-1 (FBLN1) from Gallus gallus (Chicken).